A 576-amino-acid chain; its full sequence is Putative export ATP-binding/permease protein RC1073 (576 aa).

The ABC transmembrane type-1 domain occupies 20–303 (LIIVMISLLS…IFELLSEMHL (284 aa)). The next 6 helical transmembrane spans lie at 21–41 (IIVMISLLSVSASLLLIGSVF), 57–77 (VDNSILYICLLIIILSIASFF), 135–155 (FLSFFIRNSVMLIGSITLMFF), 158–178 (FKLASIVIITIPILLIPLIKF), 242–262 (ALFFAISIAVIFLAITLVVWI), and 277–297 (IISFIYYAIIAGVSCGGIFEL). The region spanning 336–572 (IEFKNVDFTY…SEIYRNICRE (237 aa)) is the ABC transporter domain. Position 371-378 (371-378 (GRSGAGKS)) interacts with ATP.

Belongs to the ABC transporter superfamily. As to quaternary structure, homodimer.

The protein resides in the cell inner membrane. Its function is as follows. Part of an ABC transporter complex. Transmembrane domains (TMD) form a pore in the inner membrane and the ATP-binding domain (NBD) is responsible for energy generation. In Rickettsia conorii (strain ATCC VR-613 / Malish 7), this protein is Putative export ATP-binding/permease protein RC1073.